Consider the following 336-residue polypeptide: Di/tripeptide transport system permease protein DppB (336 aa).

A run of 6 helical transmembrane segments spans residues 10–30, 102–122, 145–165, 198–218, 257–277, and 307–327; these read GLLI…IRLI, LSLA…VIAA, IFWW…WTPV, AVRH…AVIA, LIPV…GAVL, and ILLV…LYGL. Positions 96-325 constitute an ABC transmembrane type-1 domain; the sequence is FPATLELSLA…LVNFVVDILY (230 aa).

Belongs to the binding-protein-dependent transport system permease family. OppBC subfamily. As to quaternary structure, the complex is composed of two ATP-binding proteins (DppD and DppF), two transmembrane proteins (DppB and DppC) and a solute-binding protein (DppA1-A5). Five orthologous SBPs (DppA1-A5) are present in P.aeruginosa, which increases the substrate specificity of the DppBCDF transporter.

It is found in the cell inner membrane. Its function is as follows. Part of the ABC transporter DppABCDF involved in the uptake of various di/tripeptides. Is also involved in the uptake of phaseolotoxin, a toxic tripeptide inhibiting the enzyme ornithine carbamoyltransferase. Responsible for the translocation of the substrate across the membrane. The polypeptide is Di/tripeptide transport system permease protein DppB (Pseudomonas aeruginosa (strain UCBPP-PA14)).